A 285-amino-acid chain; its full sequence is Cell division protein DivIB (285 aa).

A compositionally biased stretch (basic and acidic residues) spans 1 to 19 (MNEKNKNDESKHQEDKLQD). A disordered region spans residues 1 to 20 (MNEKNKNDESKHQEDKLQDQ). The Cytoplasmic portion of the chain corresponds to 1–66 (MNEKNKNDES…NRFNAMERNS (66 aa)). A helical transmembrane segment spans residues 67–87 (IHMIVILSIISLLLILLLSPL). The 71-residue stretch at 88–158 (MRFQKVEITG…QVAQIKIEEN (71 aa)) folds into the POTRA domain. The Extracellular portion of the chain corresponds to 88-285 (MRFQKVEITG…FQVGTYFQQY (198 aa)).

The protein belongs to the FtsQ/DivIB family. DivIB subfamily.

It is found in the cell membrane. In terms of biological role, cell division protein that may be involved in stabilizing or promoting the assembly of the division complex. The chain is Cell division protein DivIB from Weissella koreensis (strain KACC 15510).